We begin with the raw amino-acid sequence, 287 residues long: Octanoyl-[GcvH]:protein N-octanoyltransferase (287 aa).

A BPL/LPL catalytic domain is found at 45–253; the sequence is GESPATARSW…ELKELSGRLY (209 aa). The active-site Acyl-thioester intermediate is cysteine 150.

It belongs to the octanoyltransferase LipL family.

It catalyses the reaction N(6)-octanoyl-L-lysyl-[glycine-cleavage complex H protein] + L-lysyl-[lipoyl-carrier protein] = N(6)-octanoyl-L-lysyl-[lipoyl-carrier protein] + L-lysyl-[glycine-cleavage complex H protein]. It functions in the pathway protein modification; protein lipoylation via endogenous pathway; protein N(6)-(lipoyl)lysine from octanoyl-[acyl-carrier-protein]. Its function is as follows. Catalyzes the amidotransfer (transamidation) of the octanoyl moiety from octanoyl-GcvH to the lipoyl domain of the E2 subunit of lipoate-dependent enzymes. This is Octanoyl-[GcvH]:protein N-octanoyltransferase from Bacillus velezensis (strain DSM 23117 / BGSC 10A6 / LMG 26770 / FZB42) (Bacillus amyloliquefaciens subsp. plantarum).